The primary structure comprises 198 residues: MNGAELIIQEINKEAERKIEYILNEARQQAEKIKEEARRNAEAKAEWIIRRAKTQAELEKQRIIANARLEVRRKRLAIQEEIISSVLEEVKRRLETMSEDEYFESVKALLKEAIKELNEKKVRVMSNEKTLGLIASRIEEIKSELGDVSIELGETVDTMGGVIVETEDGRIRIDNTFEARMERFEGEIRSTIAKVLFG.

The protein belongs to the V-ATPase E subunit family. As to quaternary structure, has multiple subunits with at least A(3), B(3), C, D, E, F, H, I and proteolipid K(x).

The protein resides in the cell membrane. In terms of biological role, component of the A-type ATP synthase that produces ATP from ADP in the presence of a proton gradient across the membrane. In Pyrococcus horikoshii (strain ATCC 700860 / DSM 12428 / JCM 9974 / NBRC 100139 / OT-3), this protein is A-type ATP synthase subunit E.